The following is a 551-amino-acid chain: Mesoderm induction early response protein 3 (551 aa).

Residues 1–16 (MAEASFGSSSPVGSLS) show a composition bias toward low complexity. 2 disordered regions span residues 1 to 62 (MAEA…EKEG) and 113 to 169 (LSGD…GNSP). Residues 17–36 (SEDHDFDPTAEMLVHDYDDE) show a composition bias toward basic and acidic residues. Serine 52, serine 53, and serine 114 each carry phosphoserine. The segment covering 121–134 (QSSADDLTPSVTSH) has biased composition (polar residues). A compositionally biased stretch (acidic residues) spans 154–163 (KESEIEDVET). Serine 156 is modified (phosphoserine). Threonine 163 carries the phosphothreonine modification. Phosphoserine is present on residues serine 165 and serine 168. Residues 174 to 273 (REIMIGLEYQ…EAIERYCCNG (100 aa)) form the ELM2 domain. In terms of domain architecture, SANT spans 278–330 (EGMTAWTEEECRSFEHALMLHGKDFHLIQKDKVRSRTVAECVAFYYMWKKSER).

The protein localises to the nucleus. Its function is as follows. Transcriptional repressor. This chain is Mesoderm induction early response protein 3 (Mier3), found in Mus musculus (Mouse).